The following is a 224-amino-acid chain: MTIAEHDNVFIFVPNLIGYARIVLALIAFWFMSTNYVISGWCYVTSALLDAVDGQAARAFNQSTRFGAMLDQLTDRCGTTGLLVTLAYFYPRYMFWFQLSIAIDVACHWLFMQTSVVVGRSSHKVNDNFIMRLYYQKDILTFMCCVNELFYVCLYLLHFTYGPLIFGASLFKILAFLTGPFAVLKALISVMHAYVAGIDLAAVDVRERQERRQKSEPVSGKKVE.

Residues 1–8 (MTIAEHDN) are Cytoplasmic-facing. Residues 9-29 (VFIFVPNLIGYARIVLALIAF) traverse the membrane as a helical segment. Topologically, residues 30–35 (WFMSTN) are lumenal. The helical transmembrane segment at 36–52 (YVISGWCYVTSALLDAV) threads the bilayer. Mg(2+) contacts are provided by aspartate 50 and aspartate 53. Over 53–76 (DGQAARAFNQSTRFGAMLDQLTDR) the chain is Cytoplasmic. Glycine 54, arginine 58, and threonine 64 together coordinate a CDP-1,2-diacyl-sn-glycerol. Mg(2+) is bound by residues aspartate 71 and aspartate 75. The active-site Proton acceptor is aspartate 75. Residues 77–97 (CGTTGLLVTLAYFYPRYMFWF) traverse the membrane as a helical segment. A topological domain (lumenal) is located at residue glutamine 98. A helical membrane pass occupies residues 99-119 (LSIAIDVACHWLFMQTSVVVG). At 120-138 (RSSHKVNDNFIMRLYYQKD) the chain is on the cytoplasmic side. A helical membrane pass occupies residues 139–159 (ILTFMCCVNELFYVCLYLLHF). At 160–163 (TYGP) the chain is on the lumenal side. Residues 164–184 (LIFGASLFKILAFLTGPFAVL) traverse the membrane as a helical segment. The Cytoplasmic segment spans residues 185 to 224 (KALISVMHAYVAGIDLAAVDVRERQERRQKSEPVSGKKVE).

This sequence belongs to the CDP-alcohol phosphatidyltransferase class-I family. Mn(2+) serves as cofactor. Mg(2+) is required as a cofactor. In terms of tissue distribution, in adults, expression is higher in the head than in the body (at protein level).

Its subcellular location is the apical cell membrane. It is found in the lateral cell membrane. It carries out the reaction a CDP-1,2-diacyl-sn-glycerol + myo-inositol = a 1,2-diacyl-sn-glycero-3-phospho-(1D-myo-inositol) + CMP + H(+). Catalyzes the biosynthesis of phosphatidylinositol (PtdIns) as well as PtdIns:inositol exchange reaction. May thus act to reduce an excessive cellular PtdIns content. The exchange activity is due to the reverse reaction of PtdIns synthase and is dependent on CMP, which is tightly bound to the enzyme. Required for the regeneration of the signaling molecule phosphatidylinositol 4,5-bisphosphate (PtdInsP2) from phosphatidic acid (PA) and maintenance of its steady supply during signaling, thus playing an essential role during phospholipase C-mediated transduction. This function is essential in photoreceptors for light-activated recycling of PtdInsP2 during phototransduction. As a key enzyme of the phosphoinositide pathway, indirectly involved in the polarized secretion of basal membrane (BM) proteins in follicle epithelial (FE) cells through promoting PtdInsP2 synthesis in the apical and lateral plasma membranes of FE cells. PtdInsP2 controls the localization of Crag and perhaps the localization and expression of strat, both of which are essential for restricting the secretion of BM proteins to the basal surface. The sequence is that of CDP-diacylglycerol--inositol 3-phosphatidyltransferase from Drosophila melanogaster (Fruit fly).